Here is a 155-residue protein sequence, read N- to C-terminus: S-ribosylhomocysteine lyase (155 aa).

The Fe cation site is built by histidine 57, histidine 61, and cysteine 124.

The protein belongs to the LuxS family. As to quaternary structure, homodimer. Fe cation is required as a cofactor.

It carries out the reaction S-(5-deoxy-D-ribos-5-yl)-L-homocysteine = (S)-4,5-dihydroxypentane-2,3-dione + L-homocysteine. Its function is as follows. Involved in the synthesis of autoinducer 2 (AI-2) which is secreted by bacteria and is used to communicate both the cell density and the metabolic potential of the environment. The regulation of gene expression in response to changes in cell density is called quorum sensing. Catalyzes the transformation of S-ribosylhomocysteine (RHC) to homocysteine (HC) and 4,5-dihydroxy-2,3-pentadione (DPD). In Listeria monocytogenes serotype 4b (strain CLIP80459), this protein is S-ribosylhomocysteine lyase.